The sequence spans 327 residues: MKEISGIKVKVESGSKYTTDHGFHAVKDGIRNKKENAVHVRKPDWLKVQKQDSKEYLKVKSITKKHKLSTVCEEARCPNINECWSHGTATIMLMGSVCTRACKFCSVDTGNPKGWLDKDEPMNAAESVKLMGLEYVVLTSVDRDDLEDGGAGHYAATITAIKNLDENIKVEALTPDFAGINENIDKIINTKVDVIAQNIETVERLTHPVRDPRAGYWQTLNFLKYVKQKSPNVLTKTSIMVGLGETDEEIYKTMDDARSVGIDIITLGQYMQPTKHHLSVERFVTPQQFEEYRKVGLEKGFLEVASGPMVRSSYRADRVFKRNNLDL.

7 residues coordinate [4Fe-4S] cluster: Cys72, Cys77, Cys83, Cys98, Cys102, Cys105, and Ser313. The 220-residue stretch at 83–302 (CWSHGTATIM…RKVGLEKGFL (220 aa)) folds into the Radical SAM core domain.

It belongs to the radical SAM superfamily. Lipoyl synthase family. Requires [4Fe-4S] cluster as cofactor.

It localises to the cytoplasm. The enzyme catalyses [[Fe-S] cluster scaffold protein carrying a second [4Fe-4S](2+) cluster] + N(6)-octanoyl-L-lysyl-[protein] + 2 oxidized [2Fe-2S]-[ferredoxin] + 2 S-adenosyl-L-methionine + 4 H(+) = [[Fe-S] cluster scaffold protein] + N(6)-[(R)-dihydrolipoyl]-L-lysyl-[protein] + 4 Fe(3+) + 2 hydrogen sulfide + 2 5'-deoxyadenosine + 2 L-methionine + 2 reduced [2Fe-2S]-[ferredoxin]. The protein operates within protein modification; protein lipoylation via endogenous pathway; protein N(6)-(lipoyl)lysine from octanoyl-[acyl-carrier-protein]: step 2/2. In terms of biological role, catalyzes the radical-mediated insertion of two sulfur atoms into the C-6 and C-8 positions of the octanoyl moiety bound to the lipoyl domains of lipoate-dependent enzymes, thereby converting the octanoylated domains into lipoylated derivatives. The polypeptide is Lipoyl synthase (Francisella tularensis subsp. mediasiatica (strain FSC147)).